Here is an 833-residue protein sequence, read N- to C-terminus: DNA ligase (833 aa).

NAD(+)-binding positions include 35 to 39, 84 to 85, and Glu-115; these read DADYD and SL. Residue Lys-117 is the N6-AMP-lysine intermediate of the active site. The NAD(+) site is built by Arg-138, Glu-175, Lys-292, and Lys-316. Zn(2+) is bound by residues Cys-410, Cys-413, Cys-428, and Cys-434. Positions 750-833 constitute a BRCT domain; sequence LQTGPLDGQT…AFLGDHGQQP (84 aa).

Belongs to the NAD-dependent DNA ligase family. LigA subfamily. Mg(2+) serves as cofactor. It depends on Mn(2+) as a cofactor.

It catalyses the reaction NAD(+) + (deoxyribonucleotide)n-3'-hydroxyl + 5'-phospho-(deoxyribonucleotide)m = (deoxyribonucleotide)n+m + AMP + beta-nicotinamide D-nucleotide.. Its function is as follows. DNA ligase that catalyzes the formation of phosphodiester linkages between 5'-phosphoryl and 3'-hydroxyl groups in double-stranded DNA using NAD as a coenzyme and as the energy source for the reaction. It is essential for DNA replication and repair of damaged DNA. The sequence is that of DNA ligase from Xanthomonas euvesicatoria pv. vesicatoria (strain 85-10) (Xanthomonas campestris pv. vesicatoria).